Here is a 232-residue protein sequence, read N- to C-terminus: Ion-translocating oxidoreductase complex subunit E (232 aa).

6 helical membrane-spanning segments follow: residues 18-38, 39-59, 69-89, 93-113, 127-147, and 182-202; these read GLVQLLGLCPLLAVTATITNA, LGLGVATMLVLIGSNILVSLV, IPVFVMIIAALVTTVQLLINA, GLYLSLGIFLPLIVTNCIIIG, AAFDGLMMGLGFTLVLAVLGA, and PFLLAMLPPGAFIVMGLLIAL.

Belongs to the NqrDE/RnfAE family. The complex is composed of six subunits: RnfA, RnfB, RnfC, RnfD, RnfE and RnfG.

Its subcellular location is the cell inner membrane. Functionally, part of a membrane-bound complex that couples electron transfer with translocation of ions across the membrane. This is Ion-translocating oxidoreductase complex subunit E from Shewanella sp. (strain W3-18-1).